A 513-amino-acid polypeptide reads, in one-letter code: MSYGSIARGGGLGSRGPFGGPSRQGCQPLECARCWTEYGIRHFPCPSPESKLQNRCVGKDGEGDLGPAGTPIVPRARKRGPGVAPEGSRMPEPTSSPTIGPRKDSAAGPHGRMAGPSTTRAKKRKPNFCPQETEVLVSKVSKHHQLLFGTGLLKAEPTRRYRVWSRILQAVNALGYCRRDVVDLKHKWRDLRAVVRRKLGDLRKAAHGPSPGSGKPQALALTPVEQVVAKTFSCQALPSEGFSLEPPRATQVDPCNLQELFQEMSANVFRINSSVTSLERSLQSLGTPSDTQELRDSLHTAQQETNKTIAASASSVKQMAELLRSSCPQERLQQERPQLDRLKTQLSDAIQCYGVVQKKIAEKSRALLPMAQRGSKQSPQAPFAELADDEKVFNGSDNMWQGQEQALLPDITEEDLEAIRLREEAILQMESNLLDVNQIIKDLASMVSEQGEAVDSIEASLEAASSHAEAARQLLAGASRHQLQRHKIKCCFLSAGVTALLVIIIIIATSVRK.

Disordered regions lie at residues Met-1–Arg-23 and Glu-49–Phe-128. The segment covering Ala-7–Gly-19 has biased composition (gly residues). Residue Ser-378 is modified to Phosphoserine. The region spanning Leu-416–Ala-478 is the t-SNARE coiled-coil homology domain. Residues Cys-491–Val-511 traverse the membrane as a helical segment.

It is found in the membrane. This Homo sapiens (Human) protein is t-SNARE domain-containing protein 1 (TSNARE1).